The chain runs to 67 residues: N-(5'-phosphoribosyl)anthranilate isomerase (67 aa).

This sequence belongs to the TrpF family.

The enzyme catalyses N-(5-phospho-beta-D-ribosyl)anthranilate = 1-(2-carboxyphenylamino)-1-deoxy-D-ribulose 5-phosphate. The protein operates within amino-acid biosynthesis; L-tryptophan biosynthesis; L-tryptophan from chorismate: step 3/5. The sequence is that of N-(5'-phosphoribosyl)anthranilate isomerase (trpF) from Methanococcus voltae.